The following is a 501-amino-acid chain: Ribose import ATP-binding protein RbsA (501 aa).

2 ABC transporter domains span residues 6 to 242 (LQLS…VGRK) and 253 to 495 (VHGQ…VGKK). 38–45 (GENGAGKS) serves as a coordination point for ATP.

Belongs to the ABC transporter superfamily. Ribose importer (TC 3.A.1.2.1) family. As to quaternary structure, the complex is composed of an ATP-binding protein (RbsA), two transmembrane proteins (RbsC) and a solute-binding protein (RbsB).

The protein localises to the cell inner membrane. It carries out the reaction D-ribose(out) + ATP + H2O = D-ribose(in) + ADP + phosphate + H(+). In terms of biological role, part of the ABC transporter complex RbsABC involved in ribose import. Responsible for energy coupling to the transport system. The sequence is that of Ribose import ATP-binding protein RbsA from Vibrio vulnificus (strain CMCP6).